The chain runs to 692 residues: Elongation factor G (692 aa).

One can recognise a tr-type G domain in the interval 8–282; the sequence is PNTRNIGIMA…NVVAYLPSPV (275 aa). Residues 17 to 24, 81 to 85, and 135 to 138 each bind GTP; these read AHIDAGKT, DTPGH, and NKMD.

Belongs to the TRAFAC class translation factor GTPase superfamily. Classic translation factor GTPase family. EF-G/EF-2 subfamily.

The protein localises to the cytoplasm. Functionally, catalyzes the GTP-dependent ribosomal translocation step during translation elongation. During this step, the ribosome changes from the pre-translocational (PRE) to the post-translocational (POST) state as the newly formed A-site-bound peptidyl-tRNA and P-site-bound deacylated tRNA move to the P and E sites, respectively. Catalyzes the coordinated movement of the two tRNA molecules, the mRNA and conformational changes in the ribosome. This Brevibacillus brevis (strain 47 / JCM 6285 / NBRC 100599) protein is Elongation factor G.